The primary structure comprises 258 residues: MVALRLIPCLDVARGRVVKGINFVGLRDAGDPVELACRYSHAGADELVFLDIAASHEGRATLVDLVRRTAESVTIPFTVGGGISSVEGITELLRAGADKVSLNSSAVGRPELVREGAQRFGRQCIVVAIDARRRNSGTDGWDVYVKGGRENTGLDVVRWAQQVTELGAGEILLTSMDGDGTQAGYDLQLTRAVAAAVSVPVIASGGAGCLDHIAAALETGPEGGHASAALLASLLHDGVLTVEQIKADLLARGLKIRP.

Catalysis depends on residues D11 and D130.

Belongs to the HisA/HisF family. In terms of assembly, heterodimer of HisH and HisF.

Its subcellular location is the cytoplasm. It catalyses the reaction 5-[(5-phospho-1-deoxy-D-ribulos-1-ylimino)methylamino]-1-(5-phospho-beta-D-ribosyl)imidazole-4-carboxamide + L-glutamine = D-erythro-1-(imidazol-4-yl)glycerol 3-phosphate + 5-amino-1-(5-phospho-beta-D-ribosyl)imidazole-4-carboxamide + L-glutamate + H(+). Its pathway is amino-acid biosynthesis; L-histidine biosynthesis; L-histidine from 5-phospho-alpha-D-ribose 1-diphosphate: step 5/9. Its function is as follows. IGPS catalyzes the conversion of PRFAR and glutamine to IGP, AICAR and glutamate. The HisF subunit catalyzes the cyclization activity that produces IGP and AICAR from PRFAR using the ammonia provided by the HisH subunit. This is Imidazole glycerol phosphate synthase subunit HisF from Synechococcus sp. (strain CC9902).